A 614-amino-acid chain; its full sequence is RNA polymerase sigma factor RpoD (614 aa).

A disordered region spans residues 168 to 245; the sequence is DPDDNIAAPT…PEEKRSYPQG (78 aa). Residues 193–209 are compositionally biased toward acidic residues; sequence EADDDEEESEGGDDEEE. A compositionally biased stretch (polar residues) spans 215 to 232; sequence TRSSQPSVSVRYPSSFSD. Residues 380-450 are sigma-70 factor domain-2; it reads MVEANLRLVI…TRSIADQART (71 aa). The Interaction with polymerase core subunit RpoC signature appears at 404–407; it reads DLIQ. The tract at residues 459–535 is sigma-70 factor domain-3; that stretch reads ETINKLNRIS…DSTMQSPIYV (77 aa). The sigma-70 factor domain-4 stretch occupies residues 548–601; that stretch reads VLSGLTAREAKVLRMRFGIDMNTDHTLEEVGKQFDVTRERIRQIEAKAWRKLRH. Residues 574–593 constitute a DNA-binding region (H-T-H motif); the sequence is LEEVGKQFDVTRERIRQIEA.

The protein belongs to the sigma-70 factor family. RpoD/SigA subfamily. As to quaternary structure, interacts transiently with the RNA polymerase catalytic core.

The protein localises to the cytoplasm. In terms of biological role, sigma factors are initiation factors that promote the attachment of RNA polymerase to specific initiation sites and are then released. This sigma factor is the primary sigma factor during exponential growth. This chain is RNA polymerase sigma factor RpoD, found in Pseudomonas putida (Arthrobacter siderocapsulatus).